A 144-amino-acid polypeptide reads, in one-letter code: Catabolic 3-dehydroquinase (144 aa).

The active-site Proton acceptor is the Y24. Substrate contacts are provided by N76, H82, and D89. The active-site Proton donor is the H102. Residues I103–T104 and R113 each bind substrate.

It belongs to the type-II 3-dehydroquinase family. As to quaternary structure, homododecamer. Adopts a ring-like structure, composed of an arrangement of two hexameric rings stacked on top of one another.

It catalyses the reaction 3-dehydroquinate = 3-dehydroshikimate + H2O. It participates in aromatic compound metabolism; 3,4-dihydroxybenzoate biosynthesis; 3,4-dihydroxybenzoate from 3-dehydroquinate: step 1/2. Is involved in the catabolism of quinate. Allows the utilization of quinate as carbon source via the beta-ketoadipate pathway. This is Catabolic 3-dehydroquinase from Debaryomyces hansenii (strain ATCC 36239 / CBS 767 / BCRC 21394 / JCM 1990 / NBRC 0083 / IGC 2968) (Yeast).